The sequence spans 375 residues: DNA replication and repair protein RecF (375 aa).

Position 30 to 37 (30 to 37 (GDNAQGKS)) interacts with ATP.

Belongs to the RecF family.

The protein resides in the cytoplasm. In terms of biological role, the RecF protein is involved in DNA metabolism; it is required for DNA replication and normal SOS inducibility. RecF binds preferentially to single-stranded, linear DNA. It also seems to bind ATP. The polypeptide is DNA replication and repair protein RecF (Gloeobacter violaceus (strain ATCC 29082 / PCC 7421)).